A 521-amino-acid chain; its full sequence is 7-deoxyloganic acid hydroxylase (521 aa).

The helical transmembrane segment at 8-28 threads the bilayer; that stretch reads IIFLVFVSLTLYWVYRILDWV. 2 N-linked (GlcNAc...) asparagine glycosylation sites follow: Asn107 and Asn311. Cys469 provides a ligand contact to heme.

The protein belongs to the cytochrome P450 family. Mostly present in actively growing aerial organs, including leaves, flower buds and stems, and, to a lower extent, in mature leaves, roots and opened flowers. Expressed in the leaf internal phloem-associated parenchyma (IPAP) inside the mesophyll.

Its subcellular location is the endoplasmic reticulum membrane. The catalysed reaction is 7-deoxyloganate + reduced [NADPH--hemoprotein reductase] + O2 = loganate + oxidized [NADPH--hemoprotein reductase] + H2O + H(+). Its pathway is alkaloid biosynthesis. Functionally, component of the seco-iridoid and derivatives monoterpenoid indole alkaloids (MIAs, e.g. vincristine, quinine, and strychnine) biosynthesis pathway. Catalyzes the conversion of 7-deoxyloganic acid into loganic acid. Not active on 7-deoxyloganetic acid. This Catharanthus roseus (Madagascar periwinkle) protein is 7-deoxyloganic acid hydroxylase.